Reading from the N-terminus, the 340-residue chain is Nod factor export ATP-binding protein I (340 aa).

The span at methionine 1 to histidine 24 shows a compositional bias: basic and acidic residues. The tract at residues methionine 1–proline 34 is disordered. Residues glycine 25–proline 34 show a composition bias toward polar residues. The region spanning valine 42–tyrosine 272 is the ABC transporter domain. Glycine 74–serine 81 lines the ATP pocket.

It belongs to the ABC transporter superfamily. Lipooligosaccharide exporter (TC 3.A.1.102) family. As to quaternary structure, the complex is composed of two ATP-binding proteins (NodI) and two transmembrane proteins (NodJ).

It is found in the cell inner membrane. Part of the ABC transporter complex NodIJ involved in the export of the nodulation factors (Nod factors), the bacterial signal molecules that induce symbiosis and subsequent nodulation induction. Nod factors are LCO (lipo-chitin oligosaccharide), a modified beta-1,4-linked N-acetylglucosamine oligosaccharide. This subunit is responsible for energy coupling to the transport system. The polypeptide is Nod factor export ATP-binding protein I (Mesorhizobium japonicum (strain LMG 29417 / CECT 9101 / MAFF 303099) (Mesorhizobium loti (strain MAFF 303099))).